A 511-amino-acid chain; its full sequence is Maturase K (511 aa).

This sequence belongs to the intron maturase 2 family. MatK subfamily.

The protein localises to the plastid. It localises to the chloroplast. In terms of biological role, usually encoded in the trnK tRNA gene intron. Probably assists in splicing its own and other chloroplast group II introns. In Mandragora officinarum (Mandrake), this protein is Maturase K.